Reading from the N-terminus, the 719-residue chain is Ferric reductase transmembrane component 4 (719 aa).

The signal sequence occupies residues 1–18 (MLLVHIISFLLFFQLSAA). At 19–156 (KAPPSKTSLI…YGYYYNHDIP (138 aa)) the chain is on the extracellular side. Asn51, Asn80, Asn101, Asn113, Asn127, and Asn135 each carry an N-linked (GlcNAc...) asparagine glycan. Residues 157-177 (YYFGGIICAYFVGVMLLAGLI) form a helical membrane-spanning segment. Residues 178–228 (RFLNYTPIKKIMFQQKLVNYVRGYTTLPTLYEKHAEPFSYLKVITGYLPTR) lie on the Cytoplasmic side of the membrane. Residues 229–249 (FETLVILGYLILHTIFMAYKY) form a helical membrane-spanning segment. The Extracellular segment spans residues 250–267 (QYDPYHIIFAAHRAEVAH). The helical transmembrane segment at 268-288 (FVAYRSGILSFAHLPLIVLFA) threads the bilayer. One can recognise a Ferric oxidoreductase domain in the interval 273 to 407 (SGILSFAHLP…SGIEWIYAAI (135 aa)). The Cytoplasmic portion of the chain corresponds to 289–304 (GRNNFLQLISGLKHTS). A helical membrane pass occupies residues 305-325 (FIVFHKWLGRMMFLDAIIHAA). 2 residues coordinate heme: His309 and His323. The Extracellular portion of the chain corresponds to 326–346 (GFTNYYLYYKKWNTVRLRVYW). Residues 347–367 (KFGIATTCLAGMLIFFSIAAF) traverse the membrane as a helical segment. Residues 368–373 (RRHYYE) are Cytoplasmic-facing. The helical transmembrane segment at 374–394 (TFMALHIVFAALFLYTCWEHV) threads the bilayer. Heme is bound by residues His379 and His393. Position 395 (Thr395) is a topological domain, extracellular. The chain crosses the membrane as a helical span at residues 396-416 (NFSGIEWIYAAIAIWGVDRIV). One can recognise an FAD-binding FR-type domain in the interval 408-527 (AIWGVDRIVR…EGPYGSKSTA (120 aa)). Topologically, residues 417–719 (RITRIALLGF…IEYLEEYQAW (303 aa)) are cytoplasmic. 472–478 (HPFTVMD) lines the FAD pocket. 519–522 (GPYG) lines the NADP(+) pocket. Polar residues-rich tracts occupy residues 606–618 (EKISSNEVKNGET) and 625–643 (SSLSNSEKAPSESENTELP). The disordered stretch occupies residues 606 to 643 (EKISSNEVKNGETTAEKAPSSLSNSEKAPSESENTELP). 685-686 (CG) is a binding site for NADP(+).

It belongs to the ferric reductase (FRE) family. FAD is required as a cofactor.

The protein resides in the cell membrane. It carries out the reaction 2 a Fe(II)-siderophore + NADP(+) + H(+) = 2 a Fe(III)-siderophore + NADPH. Its function is as follows. Siderophore-iron reductase responsible for reducing extracellular iron prior to import. Catalyzes the reductive uptake of Fe(3+) bound to dihydroxamate rhodotorulic acid. Fe(3+) is reduced to Fe(2+), which then dissociates from the siderophore and can be imported by the high-affinity Fe(2+) transport complex in the plasma membrane. The polypeptide is Ferric reductase transmembrane component 4 (FRE4) (Saccharomyces cerevisiae (strain ATCC 204508 / S288c) (Baker's yeast)).